Consider the following 421-residue polypeptide: Enolase (421 aa).

Gln-161 contributes to the (2R)-2-phosphoglycerate binding site. The active-site Proton donor is the Glu-203. Mg(2+) contacts are provided by Asp-240, Glu-283, and Asp-310. (2R)-2-phosphoglycerate contacts are provided by Lys-335, Arg-364, Ser-365, and Lys-386. Lys-335 (proton acceptor) is an active-site residue.

The protein belongs to the enolase family. It depends on Mg(2+) as a cofactor.

The protein localises to the cytoplasm. The protein resides in the secreted. It is found in the cell surface. The catalysed reaction is (2R)-2-phosphoglycerate = phosphoenolpyruvate + H2O. The protein operates within carbohydrate degradation; glycolysis; pyruvate from D-glyceraldehyde 3-phosphate: step 4/5. Functionally, catalyzes the reversible conversion of 2-phosphoglycerate (2-PG) into phosphoenolpyruvate (PEP). It is essential for the degradation of carbohydrates via glycolysis. The chain is Enolase from Sulfurimonas denitrificans (strain ATCC 33889 / DSM 1251) (Thiomicrospira denitrificans (strain ATCC 33889 / DSM 1251)).